A 390-amino-acid chain; its full sequence is Ureide permease 1 (390 aa).

Over 1-9 the chain is Extracellular; it reads MYMIESKGG. The helical transmembrane segment at 10-30 threads the bilayer; that stretch reads AIACMLLALLFLGTWPAIMTL. At 31–44 the chain is on the cytoplasmic side; sequence TERRGRLPQHTYLD. A helical transmembrane segment spans residues 45–65; the sequence is YTLTNLLAAVIIALTLGEIGP. Residues 66 to 78 lie on the Extracellular side of the membrane; the sequence is SRPNFFTQLSQDN. Residues 79-99 traverse the membrane as a helical segment; it reads WQSVMFAMAGGIVLSLGNLAT. At 100 to 101 the chain is on the cytoplasmic side; it reads QY. The helical transmembrane segment at 102–122 threads the bilayer; that stretch reads AWAYVGLSVTEVITASITVVI. The Extracellular portion of the chain corresponds to 123 to 136; sequence GTTLNYFLDDRINR. The chain crosses the membrane as a helical span at residues 137 to 157; it reads AEVLFPGVACFLIAVCFGSAV. At 158-221 the chain is on the cytoplasmic side; that stretch reads HKSNAADNKT…RAIKVFGKST (64 aa). 213–220 serves as a coordination point for ATP; it reads AIKVFGKS. A helical membrane pass occupies residues 222–242; the sequence is IIGLVITFFAGICFSLFSPAF. Residues 243–261 lie on the Extracellular side of the membrane; that stretch reads NLATNDQWHTLKHGVPKLN. Residues 262-282 traverse the membrane as a helical segment; sequence VYTAFFYFSISAFVVALILNI. Residues 283–307 are Cytoplasmic-facing; the sequence is RFLYWPILGLPRSSFKAYLNDWNGR. The chain crosses the membrane as a helical span at residues 308-328; it reads GWSFLAGFLCGFGNGLQFMGG. At 329–333 the chain is on the extracellular side; the sequence is QAAGY. Residues 334–354 traverse the membrane as a helical segment; the sequence is AAADAVQALPLVSTFWGILLF. Residues 355–363 lie on the Cytoplasmic side of the membrane; sequence GEYRRSSRK. The chain crosses the membrane as a helical span at residues 364-384; sequence TYTLLISMLLMFIVAVAVLMA. At 385–390 the chain is on the extracellular side; that stretch reads SSGHRK.

It belongs to the plant ureide permease (TC 2.A.7.19) family. In terms of tissue distribution, expressed in leaves, flowers, roots and stems.

The protein resides in the membrane. Proton-coupled transporter that transports a wide spectrum of oxo derivatives of heterocyclic nitrogen compounds, including allantoin, uric acid and xanthine, but not adenine. Mediates high affinity transport of uracil and 5-fluorouracil (a toxic uracil analog). Mediates transport of free pyrimidines and may function during early seedling development in salvage pathways, by the utilization of pyrimidines from seed storage tissue. This is Ureide permease 1 from Arabidopsis thaliana (Mouse-ear cress).